A 464-amino-acid chain; its full sequence is tRNA-2-methylthio-N(6)-dimethylallyladenosine synthase (464 aa).

Residues 19–135 (GSYWITTFGC…LENLLERVDL (117 aa)) form the MTTase N-terminal domain. The [4Fe-4S] cluster site is built by Cys28, Cys64, Cys98, Cys170, Cys174, and Cys177. The Radical SAM core domain occupies 156–393 (RDSSICGWVN…NELVETTSRK (238 aa)). A TRAM domain is found at 396–464 (QRYLNNIESV…SFSLSGQIYK (69 aa)).

The protein belongs to the methylthiotransferase family. MiaB subfamily. In terms of assembly, monomer. Requires [4Fe-4S] cluster as cofactor.

The protein localises to the cytoplasm. The enzyme catalyses N(6)-dimethylallyladenosine(37) in tRNA + (sulfur carrier)-SH + AH2 + 2 S-adenosyl-L-methionine = 2-methylsulfanyl-N(6)-dimethylallyladenosine(37) in tRNA + (sulfur carrier)-H + 5'-deoxyadenosine + L-methionine + A + S-adenosyl-L-homocysteine + 2 H(+). Functionally, catalyzes the methylthiolation of N6-(dimethylallyl)adenosine (i(6)A), leading to the formation of 2-methylthio-N6-(dimethylallyl)adenosine (ms(2)i(6)A) at position 37 in tRNAs that read codons beginning with uridine. The chain is tRNA-2-methylthio-N(6)-dimethylallyladenosine synthase from Prochlorococcus marinus subsp. pastoris (strain CCMP1986 / NIES-2087 / MED4).